Reading from the N-terminus, the 532-residue chain is Zinc metalloproteinase nas-29 (532 aa).

Positions 1 to 22 are cleaved as a signal peptide; that stretch reads MISKNTSFCGFLILVLATCMSA. Residues Asn5, Asn27, Asn70, and Asn106 are each glycosylated (N-linked (GlcNAc...) asparagine). A propeptide spanning residues 23–134 is cleaved from the precursor; that stretch reads QFVSNESIKL…NGESTDRTKR (112 aa). The 201-residue stretch at 135–335 folds into the Peptidase M12A domain; that stretch reads QAYLDNNYPA…HIMNQHYQCQ (201 aa). 6 cysteine pairs are disulfide-bonded: Cys179-Cys334, Cys201-Cys222, Cys338-Cys358, Cys360-Cys369, Cys380-Cys408, and Cys435-Cys456. Residue His230 participates in Zn(2+) binding. Glu231 is a catalytic residue. Zn(2+)-binding residues include His234 and His240. An EGF-like domain is found at 330–370; it reads QHYQCQEKCPTQAPCQNGGFTNSRNCKVCKCPTGFGGAYCQ. The region spanning 380 to 494 is the CUB domain; the sequence is CGGYLNAEET…VSFEYSFVST (115 aa). Asn503 carries N-linked (GlcNAc...) asparagine glycosylation.

It depends on Zn(2+) as a cofactor.

The protein localises to the secreted. Functionally, metalloprotease. This chain is Zinc metalloproteinase nas-29 (nas-29), found in Caenorhabditis elegans.